A 129-amino-acid chain; its full sequence is LEM domain-containing protein 1 (129 aa).

The region spanning Met-1–Pro-45 is the LEM domain. The interval Pro-45 to Ala-129 is disordered. The span at Ser-83–Ala-97 shows a compositional bias: basic and acidic residues.

This is LEM domain-containing protein 1 (Lemd1) from Mus musculus (Mouse).